A 350-amino-acid polypeptide reads, in one-letter code: Peroxidase 24 (350 aa).

The signal sequence occupies residues 1–27 (MANKSLEIRFLFPLVLFLVVKLLCVDG). 4 disulfides stabilise this stretch: cysteine 55-cysteine 135, cysteine 88-cysteine 93, cysteine 141-cysteine 346, and cysteine 221-cysteine 253. The N-linked (GlcNAc...) asparagine glycan is linked to asparagine 73. Histidine 86 acts as the Proton acceptor in catalysis. Ca(2+) contacts are provided by aspartate 87, valine 90, glycine 92, aspartate 94, and serine 96. Proline 184 contacts substrate. N-linked (GlcNAc...) asparagine glycosylation is present at asparagine 189. Histidine 214 is a heme b binding site. Threonine 215 is a Ca(2+) binding site. N-linked (GlcNAc...) asparagine glycosylation occurs at asparagine 230. Residues aspartate 269 and aspartate 277 each coordinate Ca(2+).

Belongs to the peroxidase family. Classical plant (class III) peroxidase subfamily. The cofactor is heme b. It depends on Ca(2+) as a cofactor.

It is found in the secreted. The enzyme catalyses 2 a phenolic donor + H2O2 = 2 a phenolic radical donor + 2 H2O. Removal of H(2)O(2), oxidation of toxic reductants, biosynthesis and degradation of lignin, suberization, auxin catabolism, response to environmental stresses such as wounding, pathogen attack and oxidative stress. These functions might be dependent on each isozyme/isoform in each plant tissue. This is Peroxidase 24 (PER24) from Arabidopsis thaliana (Mouse-ear cress).